We begin with the raw amino-acid sequence, 130 residues long: Small ribosomal subunit protein uS8A (130 aa).

Belongs to the universal ribosomal protein uS8 family. As to quaternary structure, component of the small ribosomal subunit (SSU). Mature yeast ribosomes consist of a small (40S) and a large (60S) subunit. The 40S small subunit contains 1 molecule of ribosomal RNA (18S rRNA) and at least 33 different proteins. The large 60S subunit contains 3 rRNA molecules (25S, 5.8S and 5S rRNA) and at least 46 different proteins.

The protein resides in the cytoplasm. Its subcellular location is the nucleus. Functionally, component of the ribosome, a large ribonucleoprotein complex responsible for the synthesis of proteins in the cell. The small ribosomal subunit (SSU) binds messenger RNAs (mRNAs) and translates the encoded message by selecting cognate aminoacyl-transfer RNA (tRNA) molecules. The large subunit (LSU) contains the ribosomal catalytic site termed the peptidyl transferase center (PTC), which catalyzes the formation of peptide bonds, thereby polymerizing the amino acids delivered by tRNAs into a polypeptide chain. The nascent polypeptides leave the ribosome through a tunnel in the LSU and interact with protein factors that function in enzymatic processing, targeting, and the membrane insertion of nascent chains at the exit of the ribosomal tunnel. The polypeptide is Small ribosomal subunit protein uS8A (rps2201) (Schizosaccharomyces pombe (strain 972 / ATCC 24843) (Fission yeast)).